A 393-amino-acid chain; its full sequence is Chorismate synthase (393 aa).

Arginine 39 and arginine 45 together coordinate NADP(+). FMN contacts are provided by residues 133–135 (RSS), 256–257 (NA), glycine 301, 316–320 (KPIPT), and arginine 342.

The protein belongs to the chorismate synthase family. As to quaternary structure, homotetramer. Requires FMNH2 as cofactor.

The enzyme catalyses 5-O-(1-carboxyvinyl)-3-phosphoshikimate = chorismate + phosphate. It participates in metabolic intermediate biosynthesis; chorismate biosynthesis; chorismate from D-erythrose 4-phosphate and phosphoenolpyruvate: step 7/7. Functionally, catalyzes the anti-1,4-elimination of the C-3 phosphate and the C-6 proR hydrogen from 5-enolpyruvylshikimate-3-phosphate (EPSP) to yield chorismate, which is the branch point compound that serves as the starting substrate for the three terminal pathways of aromatic amino acid biosynthesis. This reaction introduces a second double bond into the aromatic ring system. The chain is Chorismate synthase from Lysinibacillus sphaericus (strain C3-41).